The chain runs to 529 residues: Bifunctional purine biosynthesis protein PurH (529 aa).

Residues 1–148 (MQQRRPVRRA…KNHKDVAIVV (148 aa)) enclose the MGS-like domain.

Belongs to the PurH family.

It catalyses the reaction (6R)-10-formyltetrahydrofolate + 5-amino-1-(5-phospho-beta-D-ribosyl)imidazole-4-carboxamide = 5-formamido-1-(5-phospho-D-ribosyl)imidazole-4-carboxamide + (6S)-5,6,7,8-tetrahydrofolate. The enzyme catalyses IMP + H2O = 5-formamido-1-(5-phospho-D-ribosyl)imidazole-4-carboxamide. It functions in the pathway purine metabolism; IMP biosynthesis via de novo pathway; 5-formamido-1-(5-phospho-D-ribosyl)imidazole-4-carboxamide from 5-amino-1-(5-phospho-D-ribosyl)imidazole-4-carboxamide (10-formyl THF route): step 1/1. The protein operates within purine metabolism; IMP biosynthesis via de novo pathway; IMP from 5-formamido-1-(5-phospho-D-ribosyl)imidazole-4-carboxamide: step 1/1. The sequence is that of Bifunctional purine biosynthesis protein PurH from Salmonella paratyphi C (strain RKS4594).